The sequence spans 283 residues: Urease accessory protein UreD (283 aa).

Positions 1 to 21 are disordered; that stretch reads MTQTQPVGTLRLTIDDQGPQG.

The protein belongs to the UreD family. In terms of assembly, ureD, UreF and UreG form a complex that acts as a GTP-hydrolysis-dependent molecular chaperone, activating the urease apoprotein by helping to assemble the nickel containing metallocenter of UreC. The UreE protein probably delivers the nickel.

It localises to the cytoplasm. Functionally, probably acts in the maturation of urease via the functional incorporation of the urease nickel metallocenter. Required for urease expression. This Corynebacterium glutamicum (strain ATCC 13032 / DSM 20300 / JCM 1318 / BCRC 11384 / CCUG 27702 / LMG 3730 / NBRC 12168 / NCIMB 10025 / NRRL B-2784 / 534) protein is Urease accessory protein UreD.